The sequence spans 86 residues: Large ribosomal subunit protein bL27 (86 aa).

The segment at 1–26 (MATKKAGGSSRNGRDSAGRRLGVKKS) is disordered.

Belongs to the bacterial ribosomal protein bL27 family.

The sequence is that of Large ribosomal subunit protein bL27 from Rickettsia prowazekii (strain Madrid E).